A 98-amino-acid chain; its full sequence is Co-chaperonin GroES (98 aa).

It belongs to the GroES chaperonin family. As to quaternary structure, heptamer of 7 subunits arranged in a ring. Interacts with the chaperonin GroEL.

It is found in the cytoplasm. Together with the chaperonin GroEL, plays an essential role in assisting protein folding. The GroEL-GroES system forms a nano-cage that allows encapsulation of the non-native substrate proteins and provides a physical environment optimized to promote and accelerate protein folding. GroES binds to the apical surface of the GroEL ring, thereby capping the opening of the GroEL channel. The sequence is that of Co-chaperonin GroES from Renibacterium salmoninarum (strain ATCC 33209 / DSM 20767 / JCM 11484 / NBRC 15589 / NCIMB 2235).